A 104-amino-acid chain; its full sequence is Nucleoid-associated protein LSL_1227 (104 aa).

Residues 1 to 19 (MMMRGMNMQSMMKQMQKLQ) are compositionally biased toward low complexity. The tract at residues 1-24 (MMMRGMNMQSMMKQMQKLQKNMKK) is disordered.

Belongs to the YbaB/EbfC family. As to quaternary structure, homodimer.

The protein localises to the cytoplasm. It localises to the nucleoid. Its function is as follows. Binds to DNA and alters its conformation. May be involved in regulation of gene expression, nucleoid organization and DNA protection. In Ligilactobacillus salivarius (strain UCC118) (Lactobacillus salivarius), this protein is Nucleoid-associated protein LSL_1227.